We begin with the raw amino-acid sequence, 208 residues long: Small ribosomal subunit protein uS4A (208 aa).

Positions 98 to 164 (TRLDNVVYTL…AKIQSAIQAV (67 aa)) constitute an S4 RNA-binding domain.

The protein belongs to the universal ribosomal protein uS4 family. Part of the 30S ribosomal subunit. Contacts protein S5. The interaction surface between S4 and S5 is involved in control of translational fidelity.

One of the primary rRNA binding proteins, it binds directly to 16S rRNA where it nucleates assembly of the body of the 30S subunit. Its function is as follows. With S5 and S12 plays an important role in translational accuracy. This Bdellovibrio bacteriovorus (strain ATCC 15356 / DSM 50701 / NCIMB 9529 / HD100) protein is Small ribosomal subunit protein uS4A.